A 238-amino-acid chain; its full sequence is tRNA1(Val) (adenine(37)-N6)-methyltransferase (238 aa).

The protein belongs to the methyltransferase superfamily. tRNA (adenine-N(6)-)-methyltransferase family.

It is found in the cytoplasm. The enzyme catalyses adenosine(37) in tRNA1(Val) + S-adenosyl-L-methionine = N(6)-methyladenosine(37) in tRNA1(Val) + S-adenosyl-L-homocysteine + H(+). In terms of biological role, specifically methylates the adenine in position 37 of tRNA(1)(Val) (anticodon cmo5UAC). This is tRNA1(Val) (adenine(37)-N6)-methyltransferase from Shewanella putrefaciens (strain CN-32 / ATCC BAA-453).